A 279-amino-acid chain; its full sequence is MTERFDCHHCNESLYGKKYILKEENPHCVACFEELYANTCEECGTPIGCDCKDLSYKDRHWHEGCFHCSRCGSSLVDKPFAAKEEQLLCTDCYSNEYSSKCQECKKTIMPGTRKMEYKGSSWHETCFTCQRCQQPIGTKSFIPKENQNFCVPCYEKQYALQCVQCKKPITTGGVTYREQPWHKECFVCTACKKQLSGQRFTARDEFPYCLTCFCDLYAKKCAGCTNPISGLGGTKYISFEERQWHNDCFNCKKCSLSLVGRGFLTERDDILCPDCGKDI.

A C4-type zinc finger spans residues 7-31 (CHHCNESLYGKKYILKEENPHCVAC). LIM zinc-binding domains lie at 40–92 (CEEC…CTDC), 101–153 (CQEC…CVPC), and 162–212 (CVQC…CLTC). A Glycyl lysine isopeptide (Lys-Gly) (interchain with G-Cter in SUMO2) cross-link involves residue lysine 78. Residues lysine 167 and lysine 220 each participate in a glycyl lysine isopeptide (Lys-Gly) (interchain with G-Cter in SUMO2) cross-link. One can recognise an LIM zinc-binding 4 domain in the interval 221-275 (CAGCTNPISGLGGTKYISFEERQWHNDCFNCKKCSLSLVGRGFLTERDDILCPDC). Residue serine 238 is modified to Phosphoserine.

As to quaternary structure, interacts with ZNF638 and TTN/titin. Interacts with E4F1. Interacts with GRB7. Interacts with SIRT1 and FOXO1. Interacts with CEFIP. Interacts with calcineurin. Interacts with FOXK1. In terms of tissue distribution, highly expressed in heart but also detectable in brain and skeletal muscle.

The protein localises to the cytoplasm. Its subcellular location is the nucleus. It is found in the myofibril. It localises to the sarcomere. The protein resides in the z line. In terms of biological role, may function as a molecular transmitter linking various signaling pathways to transcriptional regulation. Negatively regulates the transcriptional repressor E4F1 and may function in cell growth. Inhibits the transcriptional activity of FOXO1 and its apoptotic function by enhancing the interaction of FOXO1 with SIRT1 and FOXO1 deacetylation. Negatively regulates the calcineurin/NFAT signaling pathway in cardiomyocytes. The polypeptide is Four and a half LIM domains protein 2 (Fhl2) (Mus musculus (Mouse)).